The sequence spans 1906 residues: Alpha-2-macroglobulin homolog (1906 aa).

The N-terminal stretch at 1–21 (MIIRVCIRCFIVLTLVLGIGG) is a signal peptide. Residue cysteine 22 is the site of N-palmitoyl cysteine attachment. Residue cysteine 22 is the site of S-diacylglycerol cysteine attachment.

The protein belongs to the protease inhibitor I39 (alpha-2-macroglobulin) family. Bacterial alpha-2-macroglobulin subfamily.

Its subcellular location is the cell membrane. This is Alpha-2-macroglobulin homolog from Nostoc sp. (strain PCC 7120 / SAG 25.82 / UTEX 2576).